Consider the following 164-residue polypeptide: V-type proton ATPase subunit c3 (164 aa).

At M1–P11 the chain is on the lumenal side. A helical transmembrane segment spans residues F12–G32. Topologically, residues T33–S54 are cytoplasmic. Residues I55–I75 form a helical membrane-spanning segment. Topologically, residues S76–H94 are lumenal. A helical transmembrane segment spans residues L95–G116. Over D117–K128 the chain is Cytoplasmic. Residues L129–L154 traverse the membrane as a helical segment. At S155–E164 the chain is on the lumenal side.

This sequence belongs to the V-ATPase proteolipid subunit family. V-ATPase is a heteromultimeric enzyme composed of a peripheral catalytic V1 complex (components A to H) attached to an integral membrane V0 proton pore complex (components: a, c, c'', d and e). The proteolipid components c and c'' are present as a hexameric ring that forms the proton-conducting pore. In terms of tissue distribution, expressed in leaf, root, flower and silique.

The protein localises to the vacuole membrane. Proton-conducting pore forming subunit of the membrane integral V0 complex of vacuolar ATPase. V-ATPase is responsible for acidifying a variety of intracellular compartments in eukaryotic cells. The sequence is that of V-type proton ATPase subunit c3 (VHA-c3) from Arabidopsis thaliana (Mouse-ear cress).